We begin with the raw amino-acid sequence, 314 residues long: tRNA dimethylallyltransferase (314 aa).

13–20 provides a ligand contact to ATP; it reads GPTAVGKT. 15–20 provides a ligand contact to substrate; it reads TAVGKT. The segment at 38-41 is interaction with substrate tRNA; that stretch reads DSMQ.

Belongs to the IPP transferase family. In terms of assembly, monomer. The cofactor is Mg(2+).

It carries out the reaction adenosine(37) in tRNA + dimethylallyl diphosphate = N(6)-dimethylallyladenosine(37) in tRNA + diphosphate. Catalyzes the transfer of a dimethylallyl group onto the adenine at position 37 in tRNAs that read codons beginning with uridine, leading to the formation of N6-(dimethylallyl)adenosine (i(6)A). The polypeptide is tRNA dimethylallyltransferase (Bacillus subtilis (strain 168)).